The chain runs to 69 residues: Protein SlyX homolog (69 aa).

This sequence belongs to the SlyX family.

The sequence is that of Protein SlyX homolog from Pseudomonas aeruginosa (strain LESB58).